The primary structure comprises 419 residues: Putative zinc metalloprotease spyM18_2031 (419 aa).

A Zn(2+)-binding site is contributed by His-18. Glu-19 is an active-site residue. Zn(2+) is bound at residue His-22. 4 helical membrane passes run 169-191 (LITNFAGPMNNFILGIVVFILLV), 301-323 (LAWSGAFTILNALKGLITGFSLN), 343-365 (LESVLSLMAMLSINLGIFNLIPI), and 392-411 (AYITLAGVAIMVVLMIAVTW). In terms of domain architecture, PDZ spans 175-274 (GPMNNFILGI…LKTVAVKPQK (100 aa)).

This sequence belongs to the peptidase M50B family. Zn(2+) serves as cofactor.

The protein resides in the cell membrane. In Streptococcus pyogenes serotype M18 (strain MGAS8232), this protein is Putative zinc metalloprotease spyM18_2031.